The chain runs to 248 residues: UPF0524 protein C3orf70 homolog (248 aa).

Residues 169–248 are disordered; sequence KESDTPKLGH…EVIETMETTV (80 aa). The span at 200–227 shows a compositional bias: acidic residues; sequence SCDEDTEEGAELSSEEDYSPESSWEPDE.

The protein belongs to the UPF0524 family.

Functionally, may play a role in neuronal and neurobehavioral development. This Mus musculus (Mouse) protein is UPF0524 protein C3orf70 homolog.